The chain runs to 154 residues: MAKKKSPGTLAENRKARHDYNIEDTIEAGIVLQGTEIKSIRRGSANLKDSYAQVKNGEMYLNNMHIAPYEEGNRFNHDPLRSRKLLLHKREIIKLGDQTREIGYSIVPLKLYLKHGHCKVLLGVARGKKKYDKRQALKEKAVKRDVARDMKARY.

Belongs to the SmpB family.

Its subcellular location is the cytoplasm. In terms of biological role, required for rescue of stalled ribosomes mediated by trans-translation. Binds to transfer-messenger RNA (tmRNA), required for stable association of tmRNA with ribosomes. tmRNA and SmpB together mimic tRNA shape, replacing the anticodon stem-loop with SmpB. tmRNA is encoded by the ssrA gene; the 2 termini fold to resemble tRNA(Ala) and it encodes a 'tag peptide', a short internal open reading frame. During trans-translation Ala-aminoacylated tmRNA acts like a tRNA, entering the A-site of stalled ribosomes, displacing the stalled mRNA. The ribosome then switches to translate the ORF on the tmRNA; the nascent peptide is terminated with the 'tag peptide' encoded by the tmRNA and targeted for degradation. The ribosome is freed to recommence translation, which seems to be the essential function of trans-translation. The polypeptide is SsrA-binding protein (Staphylococcus aureus (strain USA300)).